Here is a 102-residue protein sequence, read N- to C-terminus: Small ribosomal subunit protein uS10 (102 aa).

This sequence belongs to the universal ribosomal protein uS10 family. In terms of assembly, part of the 30S ribosomal subunit.

In terms of biological role, involved in the binding of tRNA to the ribosomes. The polypeptide is Small ribosomal subunit protein uS10 (Thermosipho melanesiensis (strain DSM 12029 / CIP 104789 / BI429)).